The following is a 455-amino-acid chain: D-arabinitol 4-dehydrogenase (455 aa).

Belongs to the mannitol dehydrogenase family. In terms of assembly, monomer.

It catalyses the reaction D-arabinitol + NAD(+) = D-xylulose + NADH + H(+). Its pathway is carbohydrate metabolism; D-arabinitol metabolism. The sequence is that of D-arabinitol 4-dehydrogenase (dalD) from Klebsiella pneumoniae.